A 121-amino-acid polypeptide reads, in one-letter code: Type II secretion system protein I (121 aa).

A propeptide spans 1–6 (MKKQSG) (leader sequence). Residue methionine 7 is modified to N-methylmethionine. The helical transmembrane segment at 7–27 (MTLIEVMVALVVFALAGLAVM) threads the bilayer.

Belongs to the GSP I family. In terms of assembly, type II secretion is composed of four main components: the outer membrane complex, the inner membrane complex, the cytoplasmic secretion ATPase and the periplasm-spanning pseudopilus. Interacts with core component PulG. In terms of processing, cleaved by prepilin peptidase. Post-translationally, methylated by prepilin peptidase at the amino group of the N-terminal methionine once the leader sequence is cleaved by prepilin peptidase.

The protein resides in the cell inner membrane. Component of the type II secretion system required for the energy-dependent secretion of extracellular factors such as proteases and toxins from the periplasm. Part of the pseudopilus tip complex that is critical for the recognition and binding of secretion substrates. The sequence is that of Type II secretion system protein I (pulI) from Klebsiella pneumoniae.